A 121-amino-acid chain; its full sequence is MLKMQRSQQRVALMMLMVVAAVHCQESESRRAVTEHQLMHDRGRSIQSLKRLIWLSSAIEGLHTAQARTLEPDSRWRSRGAQLYSQPGREESSGGQKRALETLLSDLYRAHLTFGLGEPEK.

Positions M1–C24 are cleaved as a signal peptide. A propeptide spanning residues Q25–S29 is cleaved from the precursor. The disordered stretch occupies residues R77–K97.

The protein belongs to the parathyroid hormone family. In terms of tissue distribution, specifically expressed in a bilateral cluster of neurons in the dorsal region of the periventricular hypothalamus. Their axons project through the midbrain and hindbrain and down the spinal cord.

The protein resides in the secreted. In terms of biological role, neuroendocrine peptide which is produced by a subset of neurons in the hypothalamus. Activates the G-protein coupled receptors pth1ra, pth1rb and pth2r with similar affinity. Receptor binding stimulates intracellular cAMP production. Plays a role in bone mineralization by regulating expression of factors involved in phosphate homeostasis. Important for embryonic bone development. This chain is Parathyroid hormone 4, found in Danio rerio (Zebrafish).